The primary structure comprises 413 residues: Tryptophan synthase beta chain (413 aa).

N6-(pyridoxal phosphate)lysine is present on Lys-106.

This sequence belongs to the TrpB family. Tetramer of two alpha and two beta chains. The cofactor is pyridoxal 5'-phosphate.

The catalysed reaction is (1S,2R)-1-C-(indol-3-yl)glycerol 3-phosphate + L-serine = D-glyceraldehyde 3-phosphate + L-tryptophan + H2O. It participates in amino-acid biosynthesis; L-tryptophan biosynthesis; L-tryptophan from chorismate: step 5/5. The beta subunit is responsible for the synthesis of L-tryptophan from indole and L-serine. The protein is Tryptophan synthase beta chain of Methylorubrum populi (strain ATCC BAA-705 / NCIMB 13946 / BJ001) (Methylobacterium populi).